The following is a 177-amino-acid chain: Large ribosomal subunit protein uL6 (177 aa).

This sequence belongs to the universal ribosomal protein uL6 family. Part of the 50S ribosomal subunit.

Its function is as follows. This protein binds to the 23S rRNA, and is important in its secondary structure. It is located near the subunit interface in the base of the L7/L12 stalk, and near the tRNA binding site of the peptidyltransferase center. The chain is Large ribosomal subunit protein uL6 from Sodalis glossinidius (strain morsitans).